The sequence spans 541 residues: Imidazole glycerol phosphate synthase hisHF (541 aa).

A Glutamine amidotransferase type-1 domain is found at 2-214 (IVSIVDYGSG…LTGNYEQPIS (213 aa)). Catalysis depends on for GATase activity residues Cys80, His189, and Glu191. The segment at 228–541 (LTKRIIACLD…LAIHDVLVRT (314 aa)) is cyclase. Residues Asp237 and Asp396 contribute to the active site.

This sequence in the C-terminal section; belongs to the HisA/HisF family.

The enzyme catalyses 5-[(5-phospho-1-deoxy-D-ribulos-1-ylimino)methylamino]-1-(5-phospho-beta-D-ribosyl)imidazole-4-carboxamide + L-glutamine = D-erythro-1-(imidazol-4-yl)glycerol 3-phosphate + 5-amino-1-(5-phospho-beta-D-ribosyl)imidazole-4-carboxamide + L-glutamate + H(+). It carries out the reaction L-glutamine + H2O = L-glutamate + NH4(+). It participates in amino-acid biosynthesis; L-histidine biosynthesis; L-histidine from 5-phospho-alpha-D-ribose 1-diphosphate: step 5/9. In terms of biological role, IGPS catalyzes the conversion of PRFAR and glutamine to IGP, AICAR and glutamate. The glutaminase domain produces the ammonia necessary for the cyclase domain to produce IGP and AICAR from PRFAR. The ammonia is channeled to the active site of the cyclase domain. This chain is Imidazole glycerol phosphate synthase hisHF (his4), found in Schizosaccharomyces pombe (strain 972 / ATCC 24843) (Fission yeast).